Consider the following 144-residue polypeptide: Large ribosomal subunit protein uL13 (144 aa).

This sequence belongs to the universal ribosomal protein uL13 family. As to quaternary structure, part of the 50S ribosomal subunit.

Its function is as follows. This protein is one of the early assembly proteins of the 50S ribosomal subunit, although it is not seen to bind rRNA by itself. It is important during the early stages of 50S assembly. The chain is Large ribosomal subunit protein uL13 from Clostridium kluyveri (strain NBRC 12016).